A 345-amino-acid polypeptide reads, in one-letter code: NADH-ubiquinone oxidoreductase chain 2 (345 aa).

Helical transmembrane passes span 3-23 (PYILSIMLISLGLGTTLTFAS), 25-45 (NWLLAWMGLEINTLAIIPLMA), 59-79 (YFITQAAAAALLLFSSLINAW), 95-115 (ALMTIAIAIKLGVAPVHFWLP), 148-168 (LMPELMIALGLMSTIVGGWGG), 177-196 (IMAYSSIAHLGWIISIMHFM), 201-223 (IINLIMYIIMTTTMFMIFNTLNS), 236-256 (FPALSAITMLALLSLGGLPPL), 273-293 (NLALTATVMALSALLSLYFYL), and 322-342 (FILPTMMIMTIAMLPISPSII).

It belongs to the complex I subunit 2 family.

It localises to the mitochondrion inner membrane. It carries out the reaction a ubiquinone + NADH + 5 H(+)(in) = a ubiquinol + NAD(+) + 4 H(+)(out). Functionally, core subunit of the mitochondrial membrane respiratory chain NADH dehydrogenase (Complex I) that is believed to belong to the minimal assembly required for catalysis. Complex I functions in the transfer of electrons from NADH to the respiratory chain. The immediate electron acceptor for the enzyme is believed to be ubiquinone. The protein is NADH-ubiquinone oxidoreductase chain 2 (MT-ND2) of Polypterus ornatipinnis (Ornate bichir).